Reading from the N-terminus, the 477-residue chain is Angiotensinogen (477 aa).

The N-terminal stretch at 1 to 24 is a signal peptide; it reads MTPTGAGLKATIFCILTWVSLTAG. Cysteine 42 and cysteine 161 are joined by a disulfide. N-linked (GlcNAc...) asparagine glycans are attached at residues asparagine 295 and asparagine 319.

Belongs to the serpin family. Post-translationally, in response to low blood pressure, the enzyme renin/REN cleaves angiotensinogen to produce angiotensin-1. Angiotensin-1 is a substrate of ACE (angiotensin converting enzyme) that removes a dipeptide to yield the physiologically active peptide angiotensin-2. Angiotensin-1 and angiotensin-2 can be further processed to generate angiotensin-3, angiotensin-4. Angiotensin 1-9 is cleaved from angiotensin-1 by ACE2 and can be further processed by ACE to produce angiotensin 1-7, angiotensin 1-5 and angiotensin 1-4. Angiotensin 1-7 has also been proposed to be cleaved from angiotensin-2 by ACE2 or from angiotensin-1 by MME (neprilysin). The disulfide bond is labile. Angiotensinogen is present in the circulation in a near 40:60 ratio with the oxidized disulfide-bonded form, which preferentially interacts with receptor-bound renin.

Its subcellular location is the secreted. In terms of biological role, essential component of the renin-angiotensin system (RAS), a potent regulator of blood pressure, body fluid and electrolyte homeostasis. Its function is as follows. Acts directly on vascular smooth muscle as a potent vasoconstrictor, affects cardiac contractility and heart rate through its action on the sympathetic nervous system, and alters renal sodium and water absorption through its ability to stimulate the zona glomerulosa cells of the adrenal cortex to synthesize and secrete aldosterone. Acts by binding to angiotensin receptors AGTR1 and AGTR2. Also binds the DEAR/FBXW7-AS1 receptor. Stimulates aldosterone release. Functionally, is a ligand for the G-protein coupled receptor MAS1. Has vasodilator and antidiuretic effects. Has an antithrombotic effect that involves MAS1-mediated release of nitric oxide from platelets. This is Angiotensinogen (Agt) from Rattus norvegicus (Rat).